Reading from the N-terminus, the 180-residue chain is UPF0227 protein Spro_1925 (180 aa).

This sequence belongs to the UPF0227 family.

This is UPF0227 protein Spro_1925 from Serratia proteamaculans (strain 568).